The sequence spans 240 residues: 2,3,4,5-tetrahydropyridine-2,6-dicarboxylate N-acetyltransferase (240 aa).

It belongs to the transferase hexapeptide repeat family. DapH subfamily.

It carries out the reaction (S)-2,3,4,5-tetrahydrodipicolinate + acetyl-CoA + H2O = L-2-acetamido-6-oxoheptanedioate + CoA. It functions in the pathway amino-acid biosynthesis; L-lysine biosynthesis via DAP pathway; LL-2,6-diaminopimelate from (S)-tetrahydrodipicolinate (acetylase route): step 1/3. Functionally, catalyzes the transfer of an acetyl group from acetyl-CoA to tetrahydrodipicolinate. The sequence is that of 2,3,4,5-tetrahydropyridine-2,6-dicarboxylate N-acetyltransferase from Bacillus mycoides (strain KBAB4) (Bacillus weihenstephanensis).